The following is a 339-amino-acid chain: Anthranilate phosphoribosyltransferase (339 aa).

5-phospho-alpha-D-ribose 1-diphosphate is bound by residues Gly-79, Gly-82–Asp-83, Ser-87, Asn-89–Thr-92, Lys-107–Ser-115, and Ser-119. Gly-79 serves as a coordination point for anthranilate. Residue Ser-91 participates in Mg(2+) binding. Asn-110 provides a ligand contact to anthranilate. Anthranilate is bound at residue Arg-165. 2 residues coordinate Mg(2+): Asp-224 and Glu-225.

Belongs to the anthranilate phosphoribosyltransferase family. As to quaternary structure, homodimer. It depends on Mg(2+) as a cofactor.

The enzyme catalyses N-(5-phospho-beta-D-ribosyl)anthranilate + diphosphate = 5-phospho-alpha-D-ribose 1-diphosphate + anthranilate. It functions in the pathway amino-acid biosynthesis; L-tryptophan biosynthesis; L-tryptophan from chorismate: step 2/5. Its function is as follows. Catalyzes the transfer of the phosphoribosyl group of 5-phosphorylribose-1-pyrophosphate (PRPP) to anthranilate to yield N-(5'-phosphoribosyl)-anthranilate (PRA). This Listeria monocytogenes serotype 4b (strain CLIP80459) protein is Anthranilate phosphoribosyltransferase.